The sequence spans 227 residues: Phosphoribosylformylglycinamidine synthase subunit PurQ (227 aa).

A Glutamine amidotransferase type-1 domain is found at 2–227; that stretch reads RWAIVRFPGA…FLGLVKEVAR (226 aa). The active-site Nucleophile is C85. Catalysis depends on residues H200 and E202.

Part of the FGAM synthase complex composed of 1 PurL, 1 PurQ and 2 PurS subunits.

The protein localises to the cytoplasm. It catalyses the reaction N(2)-formyl-N(1)-(5-phospho-beta-D-ribosyl)glycinamide + L-glutamine + ATP + H2O = 2-formamido-N(1)-(5-O-phospho-beta-D-ribosyl)acetamidine + L-glutamate + ADP + phosphate + H(+). It carries out the reaction L-glutamine + H2O = L-glutamate + NH4(+). It participates in purine metabolism; IMP biosynthesis via de novo pathway; 5-amino-1-(5-phospho-D-ribosyl)imidazole from N(2)-formyl-N(1)-(5-phospho-D-ribosyl)glycinamide: step 1/2. Functionally, part of the phosphoribosylformylglycinamidine synthase complex involved in the purines biosynthetic pathway. Catalyzes the ATP-dependent conversion of formylglycinamide ribonucleotide (FGAR) and glutamine to yield formylglycinamidine ribonucleotide (FGAM) and glutamate. The FGAM synthase complex is composed of three subunits. PurQ produces an ammonia molecule by converting glutamine to glutamate. PurL transfers the ammonia molecule to FGAR to form FGAM in an ATP-dependent manner. PurS interacts with PurQ and PurL and is thought to assist in the transfer of the ammonia molecule from PurQ to PurL. The protein is Phosphoribosylformylglycinamidine synthase subunit PurQ of Thermus thermophilus (strain ATCC 27634 / DSM 579 / HB8).